A 406-amino-acid chain; its full sequence is Cysteine desulfurase (406 aa).

Lysine 226 bears the N6-(pyridoxal phosphate)lysine mark. Residue cysteine 364 is the Cysteine persulfide intermediate of the active site.

Belongs to the class-V pyridoxal-phosphate-dependent aminotransferase family. Csd subfamily. As to quaternary structure, homodimer. Interacts with SufE and the SufBCD complex composed of SufB, SufC and SufD. The interaction with SufE is required to mediate the direct transfer of the sulfur atom from the S-sulfanylcysteine. Requires pyridoxal 5'-phosphate as cofactor.

The protein localises to the cytoplasm. The catalysed reaction is (sulfur carrier)-H + L-cysteine = (sulfur carrier)-SH + L-alanine. It carries out the reaction L-selenocysteine + AH2 = hydrogenselenide + L-alanine + A + H(+). Its pathway is cofactor biosynthesis; iron-sulfur cluster biosynthesis. Cysteine desulfurases mobilize the sulfur from L-cysteine to yield L-alanine, an essential step in sulfur metabolism for biosynthesis of a variety of sulfur-containing biomolecules. Component of the suf operon, which is activated and required under specific conditions such as oxidative stress and iron limitation. Acts as a potent selenocysteine lyase in vitro, that mobilizes selenium from L-selenocysteine. Selenocysteine lyase activity is however unsure in vivo. This is Cysteine desulfurase from Escherichia coli (strain SE11).